A 114-amino-acid chain; its full sequence is NADH-ubiquinone oxidoreductase chain 3 (114 aa).

The next 3 membrane-spanning stretches (helical) occupy residues 3 to 23 (ATILMIAMTLSTILAILSFWL), 54 to 74 (FFLIAILFLLFDLEIALLLPF), and 85 to 105 (IVILWAALILTLLTLGLIYEW).

The protein belongs to the complex I subunit 3 family.

Its subcellular location is the mitochondrion membrane. The catalysed reaction is a ubiquinone + NADH + 5 H(+)(in) = a ubiquinol + NAD(+) + 4 H(+)(out). Functionally, core subunit of the mitochondrial membrane respiratory chain NADH dehydrogenase (Complex I) that is believed to belong to the minimal assembly required for catalysis. Complex I functions in the transfer of electrons from NADH to the respiratory chain. The immediate electron acceptor for the enzyme is believed to be ubiquinone. In Xenopus laevis (African clawed frog), this protein is NADH-ubiquinone oxidoreductase chain 3 (mt-nd3).